The chain runs to 157 residues: Putative 4-hydroxy-4-methyl-2-oxoglutarate aldolase (157 aa).

Substrate-binding positions include 78–81 (GDVI) and Arg100. Residue Asp101 coordinates a divalent metal cation.

Belongs to the class II aldolase/RraA-like family. Homotrimer. Requires a divalent metal cation as cofactor.

It carries out the reaction 4-hydroxy-4-methyl-2-oxoglutarate = 2 pyruvate. The catalysed reaction is oxaloacetate + H(+) = pyruvate + CO2. Functionally, catalyzes the aldol cleavage of 4-hydroxy-4-methyl-2-oxoglutarate (HMG) into 2 molecules of pyruvate. Also contains a secondary oxaloacetate (OAA) decarboxylase activity due to the common pyruvate enolate transition state formed following C-C bond cleavage in the retro-aldol and decarboxylation reactions. The protein is Putative 4-hydroxy-4-methyl-2-oxoglutarate aldolase of Mycobacterium leprae (strain Br4923).